A 302-amino-acid polypeptide reads, in one-letter code: Galactofuranosyltransferase GlfT1 (302 aa).

It belongs to the glycosyltransferase 2 family.

The protein resides in the cell membrane. Its subcellular location is the secreted. The protein localises to the cell wall. It catalyses the reaction alpha-L-rhamnosyl-(1-&gt;3)-N-acetyl-alpha-D-glucosaminyl-diphospho-trans,octa-cis-decaprenol + 2 UDP-alpha-D-galactofuranose = beta-D-galactofuranosyl-(1-&gt;5)-beta-D-galactofuranosyl-(1-&gt;4)-alpha-L-rhamnosyl-(1-&gt;3)-N-acetyl-alpha-D-glucosaminyl-diphospho-trans,octa-cis-decaprenol + 2 UDP + 2 H(+). It participates in cell wall biogenesis; cell wall polysaccharide biosynthesis. In terms of biological role, involved in the biosynthesis of the arabinogalactan (AG) region of the mycolylarabinogalactan-peptidoglycan (mAGP) complex, an essential component of the mycobacterial cell wall. Catalyzes the transfer of the first two galactofuranosyl (Galf) units from UDP-galactofuranose (UDP-Galf) onto the rhamnosyl-GlcNAc-diphospho-decaprenol (Rha-GlcNAc-PP-C50) acceptor, yielding galactofuranosyl-galactofuranosyl-rhamnosyl-GlcNAc-diphospho-decaprenol (Galf-Galf-Rha-GlcNAc-PP-C50). Thus, GlfT1 is the initiator of galactan synthesis, while GlfT2 continues with the subsequent polymerization events. In Mycolicibacterium smegmatis (strain ATCC 700084 / mc(2)155) (Mycobacterium smegmatis), this protein is Galactofuranosyltransferase GlfT1.